The chain runs to 122 residues: Large ribosomal subunit protein uL14 (122 aa).

It belongs to the universal ribosomal protein uL14 family. As to quaternary structure, part of the 50S ribosomal subunit. Forms a cluster with proteins L3 and L19. In the 70S ribosome, L14 and L19 interact and together make contacts with the 16S rRNA in bridges B5 and B8.

Binds to 23S rRNA. Forms part of two intersubunit bridges in the 70S ribosome. In Shewanella loihica (strain ATCC BAA-1088 / PV-4), this protein is Large ribosomal subunit protein uL14.